The following is an 89-amino-acid chain: Progonadoliberin-1 (89 aa).

The N-terminal stretch at 1-23 (MKAFPTFALLFLVLLFSAHVSDA) is a signal peptide. Q24 bears the Pyrrolidone carboxylic acid mark. G33 carries the glycine amide modification.

This sequence belongs to the GnRH family. Expressed in the forebrain from larval stages.

It localises to the secreted. In terms of biological role, stimulates the secretion of gonadotropins. The chain is Progonadoliberin-1 (gnrh1) from Xenopus laevis (African clawed frog).